The primary structure comprises 702 residues: ATP-dependent RNA helicase DDX4 (702 aa).

The disordered stretch occupies residues Phe-22 to Glu-228. Polar residues predominate over residues Ser-29 to Gly-46. Composition is skewed to gly residues over residues Gly-58–Asn-68 and Arg-125–Leu-137. 2 stretches are compositionally biased toward polar residues: residues Asn-141–Thr-150 and Ser-195–Pro-215. A phosphoserine mark is found at Ser-195 and Ser-199. The segment at Lys-201–Ile-220 is interaction with RANBP9. The short motif at Leu-261 to Lys-289 is the Q motif element. A Helicase ATP-binding domain is found at Ile-292–Phe-475. Ala-305–Thr-312 is a binding site for ATP. Positions Asp-419–Asp-422 match the DEAD box motif. A Helicase C-terminal domain is found at Lys-503–Ala-648. Residues Thr-681–Pro-693 are compositionally biased toward polar residues. The interval Thr-681–Asp-702 is disordered. Ser-700 bears the Phosphoserine mark.

Belongs to the DEAD box helicase family. DDX4/VASA subfamily. Found in a mRNP complex, at least composed of TDRD1, TDRD6, TDRD7 and DDX4. Interacts with RANBP9. Interacts with RANBP10. Interacts with PIWIL2 and MAEL. Interacts with BMAL1 and CLOCK. Interacts with Tex19.1 and, probably, Tex19.2. Interacts with RBM46. In terms of tissue distribution, testis-specific.

It is found in the cytoplasm. The protein resides in the perinuclear region. It carries out the reaction ATP + H2O = ADP + phosphate + H(+). ATP-dependent RNA helicase required during spermatogenesis to repress transposable elements and preventing their mobilization, which is essential for the germline integrity. Acts via the piRNA metabolic process, which mediates the repression of transposable elements during meiosis by forming complexes composed of piRNAs and Piwi proteins and governs the methylation and subsequent repression of transposons. Involved in the secondary piRNAs metabolic process, the production of piRNAs in fetal male germ cells through a ping-pong amplification cycle. Required for PIWIL2 slicing-triggered piRNA biogenesis: helicase activity enables utilization of one of the slice cleavage fragments generated by PIWIL2 and processing these pre-piRNAs into piRNAs. This is ATP-dependent RNA helicase DDX4 from Mus musculus (Mouse).